The chain runs to 147 residues: Small ribosomal subunit protein eS10B (147 aa).

Positions 90-147 (THKRQVRPAAPRAGRPEPRERSSAADAGYRRAEKKDDGAAPGGFAPSFRGGFGRPVAA) are disordered. Basic and acidic residues predominate over residues 103 to 127 (GRPEPRERSSAADAGYRRAEKKDDG).

Belongs to the eukaryotic ribosomal protein eS10 family. Component of the small ribosomal subunit (SSU). Mature yeast ribosomes consist of a small (40S) and a large (60S) subunit. The 40S small subunit contains 1 molecule of ribosomal RNA (18S rRNA) and at least 33 different proteins. The large 60S subunit contains 3 rRNA molecules (25S, 5.8S and 5S rRNA) and at least 46 different proteins. eS10 interacts with GCN1 (via middle region); this interaction is direct and promotes GCN2 kinase activity.

The protein resides in the cytoplasm. Component of the ribosome, a large ribonucleoprotein complex responsible for the synthesis of proteins in the cell. The small ribosomal subunit (SSU) binds messenger RNAs (mRNAs) and translates the encoded message by selecting cognate aminoacyl-transfer RNA (tRNA) molecules. The large subunit (LSU) contains the ribosomal catalytic site termed the peptidyl transferase center (PTC), which catalyzes the formation of peptide bonds, thereby polymerizing the amino acids delivered by tRNAs into a polypeptide chain. The nascent polypeptides leave the ribosome through a tunnel in the LSU and interact with protein factors that function in enzymatic processing, targeting, and the membrane insertion of nascent chains at the exit of the ribosomal tunnel. eS10 plays a role as a positive regulator of the GCN2 kinase activity by stimulating GCN1-mediated GCN2 activation. The sequence is that of Small ribosomal subunit protein eS10B (rps1002) from Schizosaccharomyces pombe (strain 972 / ATCC 24843) (Fission yeast).